We begin with the raw amino-acid sequence, 55 residues long: uncharacterized protein (55 aa).

The span at 1 to 15 (MVGQEQLESSPLCQH) shows a compositional bias: polar residues. Residues 1–26 (MVGQEQLESSPLCQHSDNETETKREC) form a disordered region. Residues 16-26 (SDNETETKREC) show a composition bias toward basic and acidic residues.

This is an uncharacterized protein from Escherichia coli (strain K12).